A 174-amino-acid polypeptide reads, in one-letter code: ATP synthase subunit delta, sodium ion specific (174 aa).

This sequence belongs to the ATPase delta chain family. As to quaternary structure, F-type ATPases have 2 components, F(1) - the catalytic core - and F(0) - the membrane proton channel. F(1) has five subunits: alpha(3), beta(3), gamma(1), delta(1), epsilon(1). F(0) has three main subunits: a(1), b(2) and c(10-14). The alpha and beta chains form an alternating ring which encloses part of the gamma chain. F(1) is attached to F(0) by a central stalk formed by the gamma and epsilon chains, while a peripheral stalk is formed by the delta and b chains.

It localises to the cell inner membrane. F(1)F(0) ATP synthase produces ATP from ADP in the presence of a proton or sodium gradient. F-type ATPases consist of two structural domains, F(1) containing the extramembraneous catalytic core and F(0) containing the membrane proton channel, linked together by a central stalk and a peripheral stalk. During catalysis, ATP synthesis in the catalytic domain of F(1) is coupled via a rotary mechanism of the central stalk subunits to proton translocation. In terms of biological role, this protein is part of the stalk that links CF(0) to CF(1). It either transmits conformational changes from CF(0) to CF(1) or is implicated in proton conduction. The polypeptide is ATP synthase subunit delta, sodium ion specific (Ilyobacter tartaricus).